A 367-amino-acid chain; its full sequence is 4-hydroxy-3-methylbut-2-en-1-yl diphosphate synthase (flavodoxin) (367 aa).

C265, C268, C300, and E307 together coordinate [4Fe-4S] cluster.

This sequence belongs to the IspG family. [4Fe-4S] cluster is required as a cofactor.

It catalyses the reaction (2E)-4-hydroxy-3-methylbut-2-enyl diphosphate + oxidized [flavodoxin] + H2O + 2 H(+) = 2-C-methyl-D-erythritol 2,4-cyclic diphosphate + reduced [flavodoxin]. The protein operates within isoprenoid biosynthesis; isopentenyl diphosphate biosynthesis via DXP pathway; isopentenyl diphosphate from 1-deoxy-D-xylulose 5-phosphate: step 5/6. Its function is as follows. Converts 2C-methyl-D-erythritol 2,4-cyclodiphosphate (ME-2,4cPP) into 1-hydroxy-2-methyl-2-(E)-butenyl 4-diphosphate. The chain is 4-hydroxy-3-methylbut-2-en-1-yl diphosphate synthase (flavodoxin) from Bacillus anthracis.